A 204-amino-acid chain; its full sequence is Somatotropin (204 aa).

The first 17 residues, 1 to 17 (MDRVVLMLSVMSLGVSS), serve as a signal peptide directing secretion. Pyrrolidone carboxylic acid is present on Gln18. His36 is a binding site for Zn(2+). Cys69 and Cys177 form a disulfide bridge. Residue Glu186 participates in Zn(2+) binding. A disulfide bridge links Cys194 with Cys202.

This sequence belongs to the somatotropin/prolactin family.

It localises to the secreted. In terms of biological role, growth hormone plays an important role in growth control and is involved in the regulation of several anabolic processes. Implicated as an osmoregulatory substance important for seawater adaptation. The chain is Somatotropin (gh) from Sparus aurata (Gilthead sea bream).